A 432-amino-acid chain; its full sequence is MNLDSTALAYQSGFGNEFSSEALPGALPVGQNSPQKAPYGLYAELLSGTAFTMARSEARRTWLYRITPSAKHPPFRRLERQIAGAELDAPTPNRLRWDPLALPEQPTDFLDGLLRMAANAPGDKPAGVSIYQYLANRSMERCFYDADGELLLVPQLGRLRLCTELGALQVEPLEIAVIPRGMKFRVELLDGEARGYIAENHGAPLRLPDLGPIGSNGLANPRDFLTPVARYEDSRQPLQLVQKYLGELWACELDHSPLDVVAWHGNNVPYKYDLRRFNTIGTVSFDHPDPSIFTVLTSPTSVPGLANIDFVIFPPRWMVAENTFRPPWFHRNLMNEFMGLIQGAYDAKAGGFVPGGASLHSCMSAHGPDAESCDKAIAADLKPHRIDQTMAFMFETSQVLRPSRAALETPALQNDYDACWASLVSTFNPQRR.

Residue His-287 is the Proton acceptor of the active site. Positions 330 and 336 each coordinate Fe cation. Homogentisate is bound by residues Tyr-345 and His-366. His-366 contacts Fe cation.

This sequence belongs to the homogentisate dioxygenase family. Hexamer; dimer of trimers. Fe cation serves as cofactor.

The catalysed reaction is homogentisate + O2 = 4-maleylacetoacetate + H(+). It functions in the pathway amino-acid degradation; L-phenylalanine degradation; acetoacetate and fumarate from L-phenylalanine: step 4/6. In terms of biological role, involved in the catabolism of homogentisate (2,5-dihydroxyphenylacetate or 2,5-OH-PhAc), a central intermediate in the degradation of phenylalanine and tyrosine. Catalyzes the oxidative ring cleavage of the aromatic ring of homogentisate to yield maleylacetoacetate. This is Homogentisate 1,2-dioxygenase from Pseudomonas aeruginosa (strain ATCC 15692 / DSM 22644 / CIP 104116 / JCM 14847 / LMG 12228 / 1C / PRS 101 / PAO1).